The chain runs to 55 residues: Large ribosomal subunit protein bL33 (55 aa).

It belongs to the bacterial ribosomal protein bL33 family.

In Burkholderia cenocepacia (strain ATCC BAA-245 / DSM 16553 / LMG 16656 / NCTC 13227 / J2315 / CF5610) (Burkholderia cepacia (strain J2315)), this protein is Large ribosomal subunit protein bL33.